A 1067-amino-acid chain; its full sequence is UPF0507 protein KLLA0D01133g (1067 aa).

Positions 280–432 (IVEDQELEHR…FHQDTVDSLT (153 aa)) constitute a VPS9 domain.

The protein belongs to the UPF0507 family.

The sequence is that of UPF0507 protein KLLA0D01133g from Kluyveromyces lactis (strain ATCC 8585 / CBS 2359 / DSM 70799 / NBRC 1267 / NRRL Y-1140 / WM37) (Yeast).